The primary structure comprises 637 residues: Serine/threonine protein kinase ypkA (637 aa).

Low complexity predominate over residues 20–29 (TFTRSSSTST). Disordered regions lie at residues 20–63 (TFTR…SLVS) and 104–140 (SSSVRPSSSSSHSTHGQTASFAQSGRPQSTSGGINAA). Positions 40-61 (VVSQTPSISSTNSNGINASESL) are enriched in polar residues. A compositionally biased stretch (low complexity) spans 104–116 (SSSVRPSSSSSHS). Positions 117 to 136 (THGQTASFAQSGRPQSTSGG) are enriched in polar residues. Residues 294–551 (FDLLKVVGKG…AAEIKSHHFF (258 aa)) enclose the Protein kinase domain. Residues 300–308 (VGKGSFGKV) and Lys-323 each bind ATP. Asp-417 functions as the Proton acceptor in the catalytic mechanism. In terms of domain architecture, AGC-kinase C-terminal spans 552–623 (ANIDWRKLLQ…NRPVAGLGDA (72 aa)). Phosphoserine occurs at positions 593 and 612. Tyr-613 carries the phosphotyrosine modification.

The protein belongs to the protein kinase superfamily. Ser/Thr protein kinase family. As to quaternary structure, interacts with the sakA MAP kinase.

It catalyses the reaction L-seryl-[protein] + ATP = O-phospho-L-seryl-[protein] + ADP + H(+). It carries out the reaction L-threonyl-[protein] + ATP = O-phospho-L-threonyl-[protein] + ADP + H(+). Functionally, serine/threonine protein kinase required for vegetative growth and conidiation. Important for fungal survival through the regulation of glycosphingolipid (GSL) biosynthesis and cross talks with MAP kinase pathways such as the cell wall integrity (CWI) and the high osmolarity glycerol (HOG) pathways. The chain is Serine/threonine protein kinase ypkA from Aspergillus fumigatus (strain ATCC MYA-4609 / CBS 101355 / FGSC A1100 / Af293) (Neosartorya fumigata).